A 357-amino-acid polypeptide reads, in one-letter code: S-adenosylmethionine:tRNA ribosyltransferase-isomerase (357 aa).

This sequence belongs to the QueA family. Monomer.

Its subcellular location is the cytoplasm. It carries out the reaction 7-aminomethyl-7-carbaguanosine(34) in tRNA + S-adenosyl-L-methionine = epoxyqueuosine(34) in tRNA + adenine + L-methionine + 2 H(+). It functions in the pathway tRNA modification; tRNA-queuosine biosynthesis. In terms of biological role, transfers and isomerizes the ribose moiety from AdoMet to the 7-aminomethyl group of 7-deazaguanine (preQ1-tRNA) to give epoxyqueuosine (oQ-tRNA). The sequence is that of S-adenosylmethionine:tRNA ribosyltransferase-isomerase from Buchnera aphidicola subsp. Schizaphis graminum (strain Sg).